Reading from the N-terminus, the 302-residue chain is Dehydrodolichyl diphosphate synthase 3 (302 aa).

This sequence belongs to the UPP synthase family. Requires Mg(2+) as cofactor.

The protein operates within protein modification; protein glycosylation. Catalyzes cis-prenyl chain elongation to produce the polyprenyl backbone of dolichol, a glycosyl carrier-lipid required for the biosynthesis of several classes of glycoprotein. In Arabidopsis thaliana (Mouse-ear cress), this protein is Dehydrodolichyl diphosphate synthase 3.